The following is a 280-amino-acid chain: Cell division control protein 2 homolog B (280 aa).

Residues Ala-1–Val-5 and Lys-20 each bind ATP. Residues Ala-1 to Phe-274 enclose the Protein kinase domain. Position 2 is a phosphotyrosine (Tyr-2). Asp-114 acts as the Proton acceptor in catalysis. A Phosphothreonine; by CAK modification is found at Thr-148.

Belongs to the protein kinase superfamily. CMGC Ser/Thr protein kinase family. CDC2/CDKX subfamily.

It carries out the reaction L-seryl-[protein] + ATP = O-phospho-L-seryl-[protein] + ADP + H(+). The enzyme catalyses L-threonyl-[protein] + ATP = O-phospho-L-threonyl-[protein] + ADP + H(+). The catalysed reaction is [DNA-directed RNA polymerase] + ATP = phospho-[DNA-directed RNA polymerase] + ADP + H(+). Its activity is regulated as follows. Phosphorylation at Tyr-2 inactivates the enzyme, while phosphorylation at Thr-148 activates it. Functionally, plays a key role in the control of the eukaryotic cell cycle. The protein is Cell division control protein 2 homolog B (CDC2B) of Antirrhinum majus (Garden snapdragon).